Consider the following 432-residue polypeptide: Adenylosuccinate synthetase (432 aa).

GTP is bound by residues 13 to 19 (GDEGKGK) and 41 to 43 (GHT). Catalysis depends on Asp-14, which acts as the Proton acceptor. Asp-14 and Gly-41 together coordinate Mg(2+). Residues 14–17 (DEGK), 39–42 (NAGH), Thr-130, Arg-144, Gln-225, Thr-240, and Arg-304 each bind IMP. His-42 (proton donor) is an active-site residue. 300-306 (ATTGRRR) contributes to the substrate binding site. GTP is bound by residues Arg-306, 332 to 334 (KLD), and 415 to 417 (STG).

The protein belongs to the adenylosuccinate synthetase family. Homodimer. Requires Mg(2+) as cofactor.

The protein resides in the cytoplasm. It catalyses the reaction IMP + L-aspartate + GTP = N(6)-(1,2-dicarboxyethyl)-AMP + GDP + phosphate + 2 H(+). It participates in purine metabolism; AMP biosynthesis via de novo pathway; AMP from IMP: step 1/2. Its function is as follows. Plays an important role in the de novo pathway of purine nucleotide biosynthesis. Catalyzes the first committed step in the biosynthesis of AMP from IMP. In Erwinia tasmaniensis (strain DSM 17950 / CFBP 7177 / CIP 109463 / NCPPB 4357 / Et1/99), this protein is Adenylosuccinate synthetase.